We begin with the raw amino-acid sequence, 178 residues long: dCTP deaminase, dUMP-forming (178 aa).

Residues 96 to 101 (RSSLGR), aspartate 113, 121 to 123 (TLE), glutamine 142, tyrosine 156, and glutamine 163 contribute to the dCTP site. Residue glutamate 123 is the Proton donor/acceptor of the active site.

The protein belongs to the dCTP deaminase family. Homotrimer.

It catalyses the reaction dCTP + 2 H2O = dUMP + NH4(+) + diphosphate. Its pathway is pyrimidine metabolism; dUMP biosynthesis; dUMP from dCTP: step 1/1. Functionally, bifunctional enzyme that catalyzes both the deamination of dCTP to dUTP and the hydrolysis of dUTP to dUMP without releasing the toxic dUTP intermediate. The sequence is that of dCTP deaminase, dUMP-forming from Acetivibrio thermocellus (strain ATCC 27405 / DSM 1237 / JCM 9322 / NBRC 103400 / NCIMB 10682 / NRRL B-4536 / VPI 7372) (Clostridium thermocellum).